Here is a 282-residue protein sequence, read N- to C-terminus: Pantothenate synthetase (282 aa).

Position 30–37 (30–37 (MGNLHQGH)) interacts with ATP. His37 serves as the catalytic Proton donor. Gln61 is a binding site for (R)-pantoate. Beta-alanine is bound at residue Gln61. Residue 149–152 (GKKD) participates in ATP binding. Residue Gln155 participates in (R)-pantoate binding. ATP-binding positions include Ile178 and 186-189 (MSSR).

It belongs to the pantothenate synthetase family. In terms of assembly, homodimer.

Its subcellular location is the cytoplasm. The catalysed reaction is (R)-pantoate + beta-alanine + ATP = (R)-pantothenate + AMP + diphosphate + H(+). Its pathway is cofactor biosynthesis; (R)-pantothenate biosynthesis; (R)-pantothenate from (R)-pantoate and beta-alanine: step 1/1. Functionally, catalyzes the condensation of pantoate with beta-alanine in an ATP-dependent reaction via a pantoyl-adenylate intermediate. In Shewanella loihica (strain ATCC BAA-1088 / PV-4), this protein is Pantothenate synthetase.